Reading from the N-terminus, the 85-residue chain is Large ribosomal subunit protein bL27 (85 aa).

Positions 1-21 are disordered; sequence MAHKKAGGSTRNGRDSNAKRL.

It belongs to the bacterial ribosomal protein bL27 family.

This is Large ribosomal subunit protein bL27 from Erwinia tasmaniensis (strain DSM 17950 / CFBP 7177 / CIP 109463 / NCPPB 4357 / Et1/99).